A 48-amino-acid polypeptide reads, in one-letter code: Light-harvesting polypeptide B-885 beta-2 chain (48 aa).

Topologically, residues 1 to 20 are cytoplasmic; sequence AEDRKSLSGLTEQEAQEFGT. A helical membrane pass occupies residues 21–43; sequence LYTQGVAFVAVIAIVAHALVWAW. A bacteriochlorophyll is bound at residue histidine 37. The Periplasmic portion of the chain corresponds to 44–48; that stretch reads RPWLQ.

It belongs to the antenna complex beta subunit family. As to quaternary structure, the core complex is formed by different alpha and beta chains, binding bacteriochlorophyll molecules, and arranged most probably in tetrameric structures disposed around the reaction center. The non-pigmented gamma chains may constitute additional components.

The protein localises to the cell inner membrane. Its function is as follows. Antenna complexes are light-harvesting systems, which transfer the excitation energy to the reaction centers. In Rhodocyclus tenuis (Rhodospirillum tenue), this protein is Light-harvesting polypeptide B-885 beta-2 chain.